The primary structure comprises 483 residues: Regulatory protein ViaA (483 aa).

It belongs to the ViaA family. As to quaternary structure, homodimer. Interacts with RavA.

The protein resides in the cytoplasm. In terms of biological role, component of the RavA-ViaA chaperone complex, which may act on the membrane to optimize the function of some of the respiratory chains. ViaA stimulates the ATPase activity of RavA. This Salmonella heidelberg (strain SL476) protein is Regulatory protein ViaA.